The sequence spans 343 residues: Selenide, water dikinase (343 aa).

Residue Cys15 is part of the active site. Residues Lys18 and 46 to 48 (HKD) contribute to the ATP site. Mg(2+) is bound at residue Asp49. Residues Asp66, Asp89, and 137–139 (GHS) contribute to the ATP site. Asp89 provides a ligand contact to Mg(2+). Asp225 provides a ligand contact to Mg(2+).

Belongs to the selenophosphate synthase 1 family. Class I subfamily. As to quaternary structure, homodimer. It depends on Mg(2+) as a cofactor.

The catalysed reaction is hydrogenselenide + ATP + H2O = selenophosphate + AMP + phosphate + 2 H(+). In terms of biological role, synthesizes selenophosphate from selenide and ATP. In Sulfurimonas denitrificans (strain ATCC 33889 / DSM 1251) (Thiomicrospira denitrificans (strain ATCC 33889 / DSM 1251)), this protein is Selenide, water dikinase.